Here is a 163-residue protein sequence, read N- to C-terminus: Small ribosomal subunit protein uS5 (163 aa).

Residues 8–71 (LIEKIVYLNR…EKARKEMISV (64 aa)) form the S5 DRBM domain.

Belongs to the universal ribosomal protein uS5 family. Part of the 30S ribosomal subunit. Contacts proteins S4 and S8.

In terms of biological role, with S4 and S12 plays an important role in translational accuracy. Its function is as follows. Located at the back of the 30S subunit body where it stabilizes the conformation of the head with respect to the body. The sequence is that of Small ribosomal subunit protein uS5 from Maridesulfovibrio salexigens (strain ATCC 14822 / DSM 2638 / NCIMB 8403 / VKM B-1763) (Desulfovibrio salexigens).